Here is a 217-residue protein sequence, read N- to C-terminus: Pyridoxine/pyridoxamine 5'-phosphate oxidase (217 aa).

Substrate-binding positions include Arg-14–Tyr-17 and Lys-72. Residues Arg-67–Lys-72, Tyr-82–Thr-83, Arg-88, and Lys-89 each bind FMN. Residues Tyr-129, Arg-133, and Ser-137 each contribute to the substrate site. Residues Gln-146–Ser-147 and Trp-190 each bind FMN. Position 196 to 198 (Arg-196 to His-198) interacts with substrate. Arg-200 is an FMN binding site.

Belongs to the pyridoxamine 5'-phosphate oxidase family. Homodimer. FMN is required as a cofactor.

The catalysed reaction is pyridoxamine 5'-phosphate + O2 + H2O = pyridoxal 5'-phosphate + H2O2 + NH4(+). It catalyses the reaction pyridoxine 5'-phosphate + O2 = pyridoxal 5'-phosphate + H2O2. The protein operates within cofactor metabolism; pyridoxal 5'-phosphate salvage; pyridoxal 5'-phosphate from pyridoxamine 5'-phosphate: step 1/1. Its pathway is cofactor metabolism; pyridoxal 5'-phosphate salvage; pyridoxal 5'-phosphate from pyridoxine 5'-phosphate: step 1/1. Functionally, catalyzes the oxidation of either pyridoxine 5'-phosphate (PNP) or pyridoxamine 5'-phosphate (PMP) into pyridoxal 5'-phosphate (PLP). The protein is Pyridoxine/pyridoxamine 5'-phosphate oxidase of Acidovorax sp. (strain JS42).